The sequence spans 77 residues: MGGLSIWHWLIVLLIVALVFGTKKLRNIGNDLGSAVKGFKDGMKESEAPADAQQLPRSGSVNVDAKDAARSSDSNKA.

Residues 1–21 (MGGLSIWHWLIVLLIVALVFG) form a helical membrane-spanning segment. The segment at 43–77 (MKESEAPADAQQLPRSGSVNVDAKDAARSSDSNKA) is disordered. A compositionally biased stretch (basic and acidic residues) spans 64-77 (DAKDAARSSDSNKA).

Belongs to the TatA/E family. In terms of assembly, the Tat system comprises two distinct complexes: a TatABC complex, containing multiple copies of TatA, TatB and TatC subunits, and a separate TatA complex, containing only TatA subunits. Substrates initially bind to the TatABC complex, which probably triggers association of the separate TatA complex to form the active translocon.

Its subcellular location is the cell inner membrane. In terms of biological role, part of the twin-arginine translocation (Tat) system that transports large folded proteins containing a characteristic twin-arginine motif in their signal peptide across membranes. TatA could form the protein-conducting channel of the Tat system. This chain is Sec-independent protein translocase protein TatA, found in Burkholderia mallei (strain NCTC 10247).